A 527-amino-acid polypeptide reads, in one-letter code: MSSMNFNPFQNWFEKPPNPVPSINFVSLADSFFPKSQSPNFASIGLPKFSKKSPKPETAGTDEPGPYKQIAEQFLWECENIPDYRHTPEVDKLLNEDPVFEKKENPSTEEIEAEQKWWESFRASPVVQFMTRAEEIADDMNKMELEDNDTPYRKEDKDYWRAIPHVPGFDGRPMPRKAIKSKEESDDKFWDFMKQFLFGLWGFRQRPYPPGRPIDVAQAIGYKRLEKRYYDFIMKTGGWWYKDRLGRSRGPCEIITLKTAYGAGIIDRDTFIWGEDMDEWAPIHMVYGLEPAIATWEVRLGAAATAFLHKLQKGIPPWVPLKGREPKTYKQLQKEAIESKKRDMAVLEANGGVWPGVRTPSHALFLWASGSELTTVLESDHMPNKFIPKQLRLELAKVIPGLRPWEVISIEQAMDQISYGGEWYREPLGTYTTGPPYIREWNRSVMRLFRIFYNLSVRVGQKLERTVPGFDTIMDKVQKDYDKRIARRMKRREEELREEDLKHYSGRTDEDEEEEEEEDDDSNSKKD.

The transit peptide at Met-1–Lys-48 directs the protein to the chloroplast. A disordered region spans residues Ser-43 to Tyr-67. Asn-350 carries the post-translational modification Deamidated asparagine. Residues Arg-491 to Thr-508 are compositionally biased toward basic and acidic residues. Residues Arg-491–Asp-527 form a disordered region. The segment covering Asp-509 to Asp-521 has biased composition (acidic residues).

In terms of assembly, part of the Tic complex. Component of the 1-MD complex, composed of TIC20-I, TIC214, TIC100 and TIC56. Interacts with the translocating preproteins. Hydrolysis of ATP is essential for the formation of this complex. The 1-MD complex interacts with TIC21.

Its subcellular location is the plastid. The protein resides in the chloroplast inner membrane. In terms of biological role, involved in protein precursor import into chloroplasts. May be part of an intermediate translocation complex acting as a protein-conducting channel at the inner envelope. The sequence is that of Protein TIC 56, chloroplastic from Arabidopsis thaliana (Mouse-ear cress).